A 100-amino-acid polypeptide reads, in one-letter code: MQLTPHEQERLLIHVAADVAEKRRARGLKLNHPEAVALITSHILEGARDGRTVAELMSSGRKLLTRDDVMEGIPEMIHDVQVEATFPDGTKLVTVHDPIV.

The protein belongs to the urease gamma subunit family. As to quaternary structure, heterotrimer of UreA (gamma), UreB (beta) and UreC (alpha) subunits. Three heterotrimers associate to form the active enzyme.

Its subcellular location is the cytoplasm. It catalyses the reaction urea + 2 H2O + H(+) = hydrogencarbonate + 2 NH4(+). The protein operates within nitrogen metabolism; urea degradation; CO(2) and NH(3) from urea (urease route): step 1/1. The protein is Urease subunit gamma of Streptomyces avermitilis (strain ATCC 31267 / DSM 46492 / JCM 5070 / NBRC 14893 / NCIMB 12804 / NRRL 8165 / MA-4680).